The primary structure comprises 95 residues: Aspartyl/glutamyl-tRNA(Asn/Gln) amidotransferase subunit C (95 aa).

It belongs to the GatC family. Heterotrimer of A, B and C subunits.

It carries out the reaction L-glutamyl-tRNA(Gln) + L-glutamine + ATP + H2O = L-glutaminyl-tRNA(Gln) + L-glutamate + ADP + phosphate + H(+). The catalysed reaction is L-aspartyl-tRNA(Asn) + L-glutamine + ATP + H2O = L-asparaginyl-tRNA(Asn) + L-glutamate + ADP + phosphate + 2 H(+). Allows the formation of correctly charged Asn-tRNA(Asn) or Gln-tRNA(Gln) through the transamidation of misacylated Asp-tRNA(Asn) or Glu-tRNA(Gln) in organisms which lack either or both of asparaginyl-tRNA or glutaminyl-tRNA synthetases. The reaction takes place in the presence of glutamine and ATP through an activated phospho-Asp-tRNA(Asn) or phospho-Glu-tRNA(Gln). The polypeptide is Aspartyl/glutamyl-tRNA(Asn/Gln) amidotransferase subunit C (Geobacter sp. (strain M21)).